We begin with the raw amino-acid sequence, 92 residues long: Putative phosphotransferase enzyme IIB component SgcB (92 aa).

Residues 1–92 (MKKILVACGT…KQQIKALLTQ (92 aa)) form the PTS EIIB type-2 domain. The active-site Phosphocysteine intermediate is the Cys8.

The protein resides in the cytoplasm. Functionally, the phosphoenolpyruvate-dependent sugar phosphotransferase system (sugar PTS), a major carbohydrate active -transport system, catalyzes the phosphorylation of incoming sugar substrates concomitantly with their translocation across the cell membrane. This is Putative phosphotransferase enzyme IIB component SgcB (sgcB) from Escherichia coli (strain K12).